A 383-amino-acid chain; its full sequence is Chaperone protein DnaJ (383 aa).

The J domain maps to 5-70; that stretch reads DYYDVLGVSK…DKKAAYDRYG (66 aa). The CR-type zinc-finger motif lies at 142 to 220; sequence GMQKTISVPG…CRGAGREEKT (79 aa). Cys155, Cys158, Cys172, Cys175, Cys194, Cys197, Cys208, and Cys211 together coordinate Zn(2+). CXXCXGXG motif repeat units follow at residues 155–162, 172–179, 194–201, and 208–215; these read CSACEGTG, CPTCSGMG, and CQACRGAG.

Belongs to the DnaJ family. As to quaternary structure, homodimer. Zn(2+) is required as a cofactor.

The protein resides in the cytoplasm. Participates actively in the response to hyperosmotic and heat shock by preventing the aggregation of stress-denatured proteins and by disaggregating proteins, also in an autonomous, DnaK-independent fashion. Unfolded proteins bind initially to DnaJ; upon interaction with the DnaJ-bound protein, DnaK hydrolyzes its bound ATP, resulting in the formation of a stable complex. GrpE releases ADP from DnaK; ATP binding to DnaK triggers the release of the substrate protein, thus completing the reaction cycle. Several rounds of ATP-dependent interactions between DnaJ, DnaK and GrpE are required for fully efficient folding. Also involved, together with DnaK and GrpE, in the DNA replication of plasmids through activation of initiation proteins. This chain is Chaperone protein DnaJ, found in Dinoroseobacter shibae (strain DSM 16493 / NCIMB 14021 / DFL 12).